The chain runs to 240 residues: UDP-2,3-diacylglucosamine hydrolase (240 aa).

Mn(2+) contacts are provided by aspartate 8, histidine 10, aspartate 41, asparagine 79, and histidine 114. 79–80 (NR) lines the substrate pocket. Residues aspartate 122, serine 160, asparagine 164, lysine 167, and histidine 195 each contribute to the substrate site. Residues histidine 195 and histidine 197 each coordinate Mn(2+).

This sequence belongs to the LpxH family. The cofactor is Mn(2+).

It localises to the cell inner membrane. It catalyses the reaction UDP-2-N,3-O-bis[(3R)-3-hydroxytetradecanoyl]-alpha-D-glucosamine + H2O = 2-N,3-O-bis[(3R)-3-hydroxytetradecanoyl]-alpha-D-glucosaminyl 1-phosphate + UMP + 2 H(+). Its pathway is glycolipid biosynthesis; lipid IV(A) biosynthesis; lipid IV(A) from (3R)-3-hydroxytetradecanoyl-[acyl-carrier-protein] and UDP-N-acetyl-alpha-D-glucosamine: step 4/6. Hydrolyzes the pyrophosphate bond of UDP-2,3-diacylglucosamine to yield 2,3-diacylglucosamine 1-phosphate (lipid X) and UMP by catalyzing the attack of water at the alpha-P atom. Involved in the biosynthesis of lipid A, a phosphorylated glycolipid that anchors the lipopolysaccharide to the outer membrane of the cell. In Escherichia fergusonii (strain ATCC 35469 / DSM 13698 / CCUG 18766 / IAM 14443 / JCM 21226 / LMG 7866 / NBRC 102419 / NCTC 12128 / CDC 0568-73), this protein is UDP-2,3-diacylglucosamine hydrolase.